The sequence spans 244 residues: ATP synthase subunit a (244 aa).

5 consecutive transmembrane segments (helical) span residues 17–37 (LTNILMITVASVIVLLIAILT), 75–95 (FLALGVTLLMYIFVSNMLGLP), 112–132 (DPAITLTLAVMVVALTHYYGV), 170–190 (LYGNIFAGEILLGLLAGLATS), and 221–241 (GAIQAFIFTMLTMVYMSHKIS).

Belongs to the ATPase A chain family. F-type ATPases have 2 components, CF(1) - the catalytic core - and CF(0) - the membrane proton channel. CF(1) has five subunits: alpha(3), beta(3), gamma(1), delta(1), epsilon(1). CF(0) has three main subunits: a(1), b(2) and c(9-12). The alpha and beta chains form an alternating ring which encloses part of the gamma chain. CF(1) is attached to CF(0) by a central stalk formed by the gamma and epsilon chains, while a peripheral stalk is formed by the delta and b chains. The F(1)F(0) complex interacts with SpoIIIJ and YqjG; YqgA is found in the same complex.

Its subcellular location is the cell membrane. In terms of biological role, key component of the proton channel; it plays a direct role in the translocation of protons across the membrane. This Bacillus subtilis (strain 168) protein is ATP synthase subunit a.